Consider the following 200-residue polypeptide: 3-isopropylmalate dehydratase small subunit (200 aa).

This sequence belongs to the LeuD family. LeuD type 1 subfamily. As to quaternary structure, heterodimer of LeuC and LeuD.

It carries out the reaction (2R,3S)-3-isopropylmalate = (2S)-2-isopropylmalate. The protein operates within amino-acid biosynthesis; L-leucine biosynthesis; L-leucine from 3-methyl-2-oxobutanoate: step 2/4. Its function is as follows. Catalyzes the isomerization between 2-isopropylmalate and 3-isopropylmalate, via the formation of 2-isopropylmaleate. The sequence is that of 3-isopropylmalate dehydratase small subunit from Vibrio campbellii (strain ATCC BAA-1116).